We begin with the raw amino-acid sequence, 214 residues long: A-type ATP synthase subunit D (214 aa).

Belongs to the V-ATPase D subunit family. As to quaternary structure, has multiple subunits with at least A(3), B(3), C, D, E, F, H, I and proteolipid K(x).

The protein resides in the cell membrane. Its function is as follows. Component of the A-type ATP synthase that produces ATP from ADP in the presence of a proton gradient across the membrane. The polypeptide is A-type ATP synthase subunit D (Thermococcus kodakarensis (strain ATCC BAA-918 / JCM 12380 / KOD1) (Pyrococcus kodakaraensis (strain KOD1))).